Reading from the N-terminus, the 249-residue chain is MKEENEYIVKRRKKRRRKRITIFLFLLICILVTLCLKLPYFNIKYINVEGNKIIKSDNIIENSKLKKGNNIFYLNLNKYKDNIMQDPYIKNVSIRQKLPNTIDIIVKERQAVFYINSGENYFIIDKNGVLLEIRKNISGMNLIKLDGVTLKNGKIGTEIPCDSRRLELINQITSVSIKDNNLKITDVDMSHILSLKVYFKNMCVVIGTPDDIYNKLNEAVNVIISQKLIDKKGYVDVSFKGNPVYSLQQ.

The Cytoplasmic segment spans residues 1-19; sequence MKEENEYIVKRRKKRRRKR. A helical membrane pass occupies residues 20 to 40; sequence ITIFLFLLICILVTLCLKLPY. In terms of domain architecture, POTRA spans 41-109; the sequence is FNIKYINVEG…NTIDIIVKER (69 aa). The Extracellular portion of the chain corresponds to 41–249; that stretch reads FNIKYINVEG…KGNPVYSLQQ (209 aa).

It belongs to the FtsQ/DivIB family. DivIB subfamily.

Its subcellular location is the cell membrane. In terms of biological role, cell division protein that may be involved in stabilizing or promoting the assembly of the division complex. This Clostridium acetobutylicum (strain ATCC 824 / DSM 792 / JCM 1419 / IAM 19013 / LMG 5710 / NBRC 13948 / NRRL B-527 / VKM B-1787 / 2291 / W) protein is Cell division protein DivIB.